A 143-amino-acid chain; its full sequence is Mediator of RNA polymerase II transcription subunit 10 (143 aa).

Residues 123–143 are disordered; that stretch reads GAHSNTEISTNPGQKRQGNVS. Polar residues predominate over residues 124–143; it reads AHSNTEISTNPGQKRQGNVS.

It belongs to the Mediator complex subunit 10 family. Component of the Mediator complex.

The protein localises to the nucleus. Component of the Mediator complex, a coactivator involved in the regulated transcription of nearly all RNA polymerase II-dependent genes. Mediator functions as a bridge to convey information from gene-specific regulatory proteins to the basal RNA polymerase II transcription machinery. Mediator is recruited to promoters by direct interactions with regulatory proteins and serves as a scaffold for the assembly of a functional preinitiation complex with RNA polymerase II and the general transcription factors. The polypeptide is Mediator of RNA polymerase II transcription subunit 10 (NUT2) (Yarrowia lipolytica (strain CLIB 122 / E 150) (Yeast)).